The following is a 426-amino-acid chain: Glutamate-1-semialdehyde 2,1-aminomutase (426 aa).

Lysine 265 carries the post-translational modification N6-(pyridoxal phosphate)lysine.

This sequence belongs to the class-III pyridoxal-phosphate-dependent aminotransferase family. HemL subfamily. It depends on pyridoxal 5'-phosphate as a cofactor.

The protein resides in the cytoplasm. It carries out the reaction (S)-4-amino-5-oxopentanoate = 5-aminolevulinate. It participates in porphyrin-containing compound metabolism; protoporphyrin-IX biosynthesis; 5-aminolevulinate from L-glutamyl-tRNA(Glu): step 2/2. This Hyperthermus butylicus (strain DSM 5456 / JCM 9403 / PLM1-5) protein is Glutamate-1-semialdehyde 2,1-aminomutase.